The primary structure comprises 256 residues: Inner membrane transport permease YadH (256 aa).

At 1-22 (MMHLYWVALKSIWAKEIHRFMR) the chain is on the periplasmic side. An ABC transmembrane type-2 domain is found at 22–251 (RIWVQTLVPP…LICWSLIQRG (230 aa)). A helical transmembrane segment spans residues 23–43 (IWVQTLVPPVITMTLYFIIFG). Topologically, residues 44 to 52 (NLIGSRIGD) are cytoplasmic. Residues 53 to 73 (MHGFSYMQFIVPGLIMMSVIT) form a helical membrane-spanning segment. The Periplasmic segment spans residues 74-94 (NAYANVASSFFGAKFQRNIEE). A helical membrane pass occupies residues 95–115 (LLVAPVPTHVIIAGYVGGGVA). A topological domain (cytoplasmic) is located at residue Arg116. Residues 117–137 (GLFVGILVTAISLFFVPFQVH) traverse the membrane as a helical segment. Residue Ser138 is a topological domain, periplasmic. Residues 139 to 159 (WVFVALTLVLTAVLFSLAGLL) traverse the membrane as a helical segment. The Cytoplasmic segment spans residues 160-169 (NGVFAKTFDD). Residues 170–190 (ISLVPTFVLTPLTYLGGVFYS) traverse the membrane as a helical segment. Residues 191 to 223 (LTLLPPFWQGLSHLNPIVYMISGFRYGFLGIND) lie on the Periplasmic side of the membrane. A helical transmembrane segment spans residues 224 to 244 (VPLVTTFGVLVVFIVAFYLIC). The Cytoplasmic portion of the chain corresponds to 245 to 256 (WSLIQRGRGLRS).

This sequence belongs to the ABC-2 integral membrane protein family.

Its subcellular location is the cell inner membrane. This chain is Inner membrane transport permease YadH (yadH), found in Escherichia coli O157:H7.